We begin with the raw amino-acid sequence, 515 residues long: 1-pyrroline-5-carboxylate dehydrogenase (515 aa).

Active-site residues include E286 and C320.

The protein belongs to the aldehyde dehydrogenase family. RocA subfamily.

The catalysed reaction is L-glutamate 5-semialdehyde + NAD(+) + H2O = L-glutamate + NADH + 2 H(+). It functions in the pathway amino-acid degradation; L-proline degradation into L-glutamate; L-glutamate from L-proline: step 2/2. The chain is 1-pyrroline-5-carboxylate dehydrogenase from Bacillus cytotoxicus (strain DSM 22905 / CIP 110041 / 391-98 / NVH 391-98).